Reading from the N-terminus, the 249-residue chain is Methylthioribulose-1-phosphate dehydratase (249 aa).

Positions 1–25 (MVDIKPEQTQEGNNNDHLVQSDDPE) are disordered. Residues 9–18 (TQEGNNNDHL) are compositionally biased toward polar residues. Residue Cys105 coordinates substrate. The Zn(2+) site is built by His122 and His124. Catalysis depends on Glu151, which acts as the Proton donor/acceptor. His207 serves as a coordination point for Zn(2+).

This sequence belongs to the aldolase class II family. MtnB subfamily. Zn(2+) serves as cofactor.

Its subcellular location is the cytoplasm. The catalysed reaction is 5-(methylsulfanyl)-D-ribulose 1-phosphate = 5-methylsulfanyl-2,3-dioxopentyl phosphate + H2O. Its pathway is amino-acid biosynthesis; L-methionine biosynthesis via salvage pathway; L-methionine from S-methyl-5-thio-alpha-D-ribose 1-phosphate: step 2/6. Functionally, catalyzes the dehydration of methylthioribulose-1-phosphate (MTRu-1-P) into 2,3-diketo-5-methylthiopentyl-1-phosphate (DK-MTP-1-P). The chain is Methylthioribulose-1-phosphate dehydratase from Arthroderma otae (strain ATCC MYA-4605 / CBS 113480) (Microsporum canis).